Consider the following 283-residue polypeptide: Pantothenate synthetase (283 aa).

30-37 contacts ATP; sequence MGALHRGH. Histidine 37 (proton donor) is an active-site residue. Glutamine 61 contacts (R)-pantoate. Residue glutamine 61 coordinates beta-alanine. ATP is bound at residue 147 to 150; the sequence is GQKD. Glutamine 153 is a (R)-pantoate binding site. ATP contacts are provided by residues isoleucine 176 and 184 to 187; that span reads MSSR.

The protein belongs to the pantothenate synthetase family. As to quaternary structure, homodimer.

It localises to the cytoplasm. The catalysed reaction is (R)-pantoate + beta-alanine + ATP = (R)-pantothenate + AMP + diphosphate + H(+). It participates in cofactor biosynthesis; (R)-pantothenate biosynthesis; (R)-pantothenate from (R)-pantoate and beta-alanine: step 1/1. Catalyzes the condensation of pantoate with beta-alanine in an ATP-dependent reaction via a pantoyl-adenylate intermediate. The chain is Pantothenate synthetase from Cytophaga hutchinsonii (strain ATCC 33406 / DSM 1761 / CIP 103989 / NBRC 15051 / NCIMB 9469 / D465).